Here is a 176-residue protein sequence, read N- to C-terminus: Probable RNA-binding protein EIF1AD (176 aa).

One can recognise an S1-like domain in the interval 5–89; that stretch reads TKKRYITNKV…VKGEIEYILD (85 aa). The segment covering 117-128 has biased composition (basic and acidic residues); it reads AKRGKANDKMID. Residues 117 to 176 are disordered; sequence AKRGKANDKMIDDDMLPPSESEEEDDESEDEIEDTYDEDEETDDEEFDTYNPNRMQAPSK. The span at 129–164 shows a compositional bias: acidic residues; that stretch reads DDMLPPSESEEEDDESEDEIEDTYDEDEETDDEEFD. Over residues 166-176 the composition is skewed to polar residues; that stretch reads YNPNRMQAPSK.

This sequence belongs to the EIF1AD family.

The chain is Probable RNA-binding protein EIF1AD from Caenorhabditis briggsae.